Reading from the N-terminus, the 442-residue chain is Cyclin-A1-2 (442 aa).

2 stretches are compositionally biased toward polar residues: residues 1–12 (MSSSSRNLSQEN) and 39–63 (ITNQKNGSRNPSPSSTLVNCSNKIG). The segment at 1-72 (MSSSSRNLSQ…GQSKKAPKPA (72 aa)) is disordered.

The protein belongs to the cyclin family. Cyclin AB subfamily. Interacts with CDC20-1, CDC20-2, FZR2/CCS52A1 and FZR1/CCS52A2. In terms of tissue distribution, expressed in roots, stems and flowers.

Its subcellular location is the cytoplasm. It localises to the nucleus. Involved in the regulation of male meiosis progression. This chain is Cyclin-A1-2 (CYCA1-2), found in Arabidopsis thaliana (Mouse-ear cress).